A 121-amino-acid polypeptide reads, in one-letter code: Ribosome-binding factor A (121 aa).

Belongs to the RbfA family. Monomer. Binds 30S ribosomal subunits, but not 50S ribosomal subunits or 70S ribosomes.

It is found in the cytoplasm. In terms of biological role, one of several proteins that assist in the late maturation steps of the functional core of the 30S ribosomal subunit. Associates with free 30S ribosomal subunits (but not with 30S subunits that are part of 70S ribosomes or polysomes). Required for efficient processing of 16S rRNA. May interact with the 5'-terminal helix region of 16S rRNA. This chain is Ribosome-binding factor A, found in Clostridium kluyveri (strain NBRC 12016).